The primary structure comprises 279 residues: RNases MRP/P 32.9 kDa subunit (279 aa).

Ser64 is subject to Phosphoserine.

This sequence belongs to the eukaryotic/archaeal RNase P protein component 1 family. Component of nuclear RNase P and RNase MRP complexes. RNase P consists of an RNA moiety and at least 9 protein subunits including POP1, POP3, POP4, POP5, POP6, POP7, POP8, RPP1 and RPR2. RNase MRP complex consists of an RNA moiety and at least 10 protein subunits including POP1, POP3, POP4, POP5, POP6, POP7, POP8, RMP1, RPP1 and SNM1, many of which are shared with the RNase P complex.

Its subcellular location is the nucleus. Functionally, required for 5.8S rRNA and tRNA processing; associated with RNase MRP and RNase P. In Saccharomyces cerevisiae (strain ATCC 204508 / S288c) (Baker's yeast), this protein is RNases MRP/P 32.9 kDa subunit (POP4).